The sequence spans 506 residues: ATP synthase subunit alpha, chloroplastic (506 aa).

Residue 170 to 177 (GDRQTGKT) coordinates ATP.

It belongs to the ATPase alpha/beta chains family. As to quaternary structure, F-type ATPases have 2 components, CF(1) - the catalytic core - and CF(0) - the membrane proton channel. CF(1) has five subunits: alpha(3), beta(3), gamma(1), delta(1), epsilon(1). CF(0) has four main subunits: a, b, b' and c.

It localises to the plastid. The protein localises to the chloroplast thylakoid membrane. It catalyses the reaction ATP + H2O + 4 H(+)(in) = ADP + phosphate + 5 H(+)(out). Produces ATP from ADP in the presence of a proton gradient across the membrane. The alpha chain is a regulatory subunit. This is ATP synthase subunit alpha, chloroplastic from Euglena gracilis.